Here is a 414-residue protein sequence, read N- to C-terminus: DNA polymerase processivity factor (414 aa).

Residues 327-414 (SESCSLDPPR…SLKLTFNPLI (88 aa)) are disordered. Basic residues predominate over residues 389-405 (SEKRKREGGKKGPKAKS).

The protein belongs to the herpesviridae DNA polymerase accessory subunit family.

Its function is as follows. Increases the processivity of the viral polymerase, probably by acting as a sliding clamp that prevents dissociation of the polymerase from the active template. This Equine herpesvirus 2 (strain 86/87) (EHV-2) protein is DNA polymerase processivity factor (59).